The sequence spans 286 residues: Probable endonuclease 4 (286 aa).

Zn(2+) contacts are provided by H67, H107, E146, D180, H183, H217, D230, H232, and E262.

It belongs to the AP endonuclease 2 family. It depends on Zn(2+) as a cofactor.

It carries out the reaction Endonucleolytic cleavage to 5'-phosphooligonucleotide end-products.. Its function is as follows. Endonuclease IV plays a role in DNA repair. It cleaves phosphodiester bonds at apurinic or apyrimidinic (AP) sites, generating a 3'-hydroxyl group and a 5'-terminal sugar phosphate. This Methanosphaerula palustris (strain ATCC BAA-1556 / DSM 19958 / E1-9c) protein is Probable endonuclease 4.